Reading from the N-terminus, the 346-residue chain is Probable RNA methyltransferase PA1839 (346 aa).

E91 serves as the catalytic Proton acceptor. The Radical SAM core domain maps to 94 to 320 (LLPRGGLCVS…TKVRNSAGQD (227 aa)). C101 and C325 are disulfide-bonded. Residues C108, C112, and C115 each contribute to the [4Fe-4S] cluster site. S-adenosyl-L-methionine-binding positions include 153-154 (GE), S183, 206-208 (SLH), and N282. C325 serves as the catalytic S-methylcysteine intermediate.

This sequence belongs to the radical SAM superfamily. RlmN family. It depends on [4Fe-4S] cluster as a cofactor.

It localises to the cytoplasm. This chain is Probable RNA methyltransferase PA1839, found in Pseudomonas aeruginosa (strain ATCC 15692 / DSM 22644 / CIP 104116 / JCM 14847 / LMG 12228 / 1C / PRS 101 / PAO1).